Consider the following 596-residue polypeptide: Chaperonin 60 subunit beta 2, chloroplastic (596 aa).

The N-terminal 50 residues, 1–50, are a transit peptide targeting the chloroplast; it reads MASTFTATSSLGSLLAPNAIKLSSATSISSSSFGRRHNVCVRRSRPAIVC. Ser-97 and Ser-474 each carry phosphoserine. Positions 388 to 489 form a coiled coil; the sequence is TQEAVNKRVV…KDTLENDEEK (102 aa).

Belongs to the chaperonin (HSP60) family. Part of the Cpn60 complex composed of 7 alpha and 7 beta subunits. Can also form a complex composed of 14 beta subunits only. Both complexes show ATPase activity. The Cpn60 complex interacts with the Cpn10 complex. Interacts with RAB during heat stress.

Its subcellular location is the plastid. The protein resides in the chloroplast stroma. Its function is as follows. Involved in protein assisted folding. This chain is Chaperonin 60 subunit beta 2, chloroplastic (CPN60B2), found in Arabidopsis thaliana (Mouse-ear cress).